The primary structure comprises 340 residues: Replication factor C subunit 5 (340 aa).

Met1 bears the N-acetylmethionine mark. Position 60 to 67 (60 to 67 (GPPGTGKT)) interacts with ATP.

Belongs to the activator 1 small subunits family. Subunit of the RFC complex, an heteropentameric complex consisting of a large subunit RFC1 and four small subunits RFC2, RFC3, RFC4 and RFC5; the RFC complex interacts with PCNA. Forms an heterotetrameric complex with RFC2, RFC3 and RFC4; this complex has ATPase activity but is not stimulated by PCNA. The heterotetramer of subunits RFC2, RFC3, RFC4 and RFC5 interacts with RAD17.

Its subcellular location is the nucleus. In terms of biological role, subunit of the replication factor C (RFC) complex which acts during elongation of primed DNA templates by DNA polymerases delta and epsilon, and is necessary for ATP-dependent loading of proliferating cell nuclear antigen (PCNA) onto primed DNA. This is Replication factor C subunit 5 (RFC5) from Homo sapiens (Human).